The sequence spans 349 residues: MASDDRPLALTLGDPSGIGPEIALAAWQLRSERGVPPFQLIGDPEFLEATAYRLGLSVPVAEVEPDDACEVFPRALPVLPLPSGAKVIATPGAPDSANAGAIVESITAAVDLVRSGAASAVVTNPIAKFVLTRVGFAHPGHTEFLAALAAREGREPSLPVMMIWSDTLAVVPVTIHVALRRVPELLTQDLVERTARIVHADLRARFGLEHPRLVLSGLNPHAGESGTMGTEDRDVLAPAVAVLRSEGIDIRGPLPADTLFHERARATYDVALTPTHDQALIPVKTLAFDEGVNVTLGLPFVRTSPDHGTAFDIAGKGLAKPDSLIAALRLAHRLAHRPADTVLPFPARA.

Substrate-binding residues include H141 and T142. The a divalent metal cation site is built by H176, H221, and H276. 3 residues coordinate substrate: K284, N293, and R302.

This sequence belongs to the PdxA family. As to quaternary structure, homodimer. Zn(2+) is required as a cofactor. It depends on Mg(2+) as a cofactor. Requires Co(2+) as cofactor.

Its subcellular location is the cytoplasm. The enzyme catalyses 4-(phosphooxy)-L-threonine + NAD(+) = 3-amino-2-oxopropyl phosphate + CO2 + NADH. It functions in the pathway cofactor biosynthesis; pyridoxine 5'-phosphate biosynthesis; pyridoxine 5'-phosphate from D-erythrose 4-phosphate: step 4/5. Functionally, catalyzes the NAD(P)-dependent oxidation of 4-(phosphooxy)-L-threonine (HTP) into 2-amino-3-oxo-4-(phosphooxy)butyric acid which spontaneously decarboxylates to form 3-amino-2-oxopropyl phosphate (AHAP). This chain is 4-hydroxythreonine-4-phosphate dehydrogenase, found in Methylorubrum extorquens (strain CM4 / NCIMB 13688) (Methylobacterium extorquens).